Consider the following 54-residue polypeptide: Ferredoxin (54 aa).

4Fe-4S ferredoxin-type domains lie at 2 to 25 (YVIN…IQQG) and 26 to 54 (SIYA…NPED). Positions 8, 11, 14, 18, 35, 38, 41, and 45 each coordinate [4Fe-4S] cluster.

[4Fe-4S] cluster serves as cofactor.

Its function is as follows. Ferredoxins are iron-sulfur proteins that transfer electrons in a wide variety of metabolic reactions. In Peptoniphilus asaccharolyticus (Peptostreptococcus asaccharolyticus), this protein is Ferredoxin.